We begin with the raw amino-acid sequence, 471 residues long: Paraneoplastic antigen-like protein 8A (471 aa).

Disordered stretches follow at residues 188–300 (SAAG…EGSA) and 321–471 (ASRG…PSAV). Over residues 238–247 (HSRRKRQKKT) the composition is skewed to basic residues. Residues 256–269 (KKSQGSHSHSSASL) are compositionally biased toward low complexity. Over residues 270–287 (KHPEADDGKNRERLEHVR) the composition is skewed to basic and acidic residues.

Belongs to the PNMA family.

The protein is Paraneoplastic antigen-like protein 8A (PNMA8A) of Bos taurus (Bovine).